Here is a 117-residue protein sequence, read N- to C-terminus: Ribosome-binding factor A (117 aa).

The protein belongs to the RbfA family. Monomer. Binds 30S ribosomal subunits, but not 50S ribosomal subunits or 70S ribosomes.

It is found in the cytoplasm. In terms of biological role, one of several proteins that assist in the late maturation steps of the functional core of the 30S ribosomal subunit. Associates with free 30S ribosomal subunits (but not with 30S subunits that are part of 70S ribosomes or polysomes). Required for efficient processing of 16S rRNA. May interact with the 5'-terminal helix region of 16S rRNA. The sequence is that of Ribosome-binding factor A from Bacillus subtilis (strain 168).